A 196-amino-acid chain; its full sequence is MDKKIKALIKLAENLPGLGPKSARRIVLHLLKSRETTLIRFIDTMQLLYETIKHCELCGNLESESPCSICRSTKRSSDIVCVVEEITDLWAIEKAGVHNGRYHVLNGALSIVDGITPETLQIEKLKRRVSSGAVKELIIATNATVEGQTTAQYIVEVLKGTQVKLSFLAHGIPVGSEMDYLDEGTLGIAFANRRAV.

Residues 55 to 70 (CELCGNLESESPCSIC) form a C4-type zinc finger. A Toprim domain is found at 78–173 (DIVCVVEEIT…KLSFLAHGIP (96 aa)).

It belongs to the RecR family.

In terms of biological role, may play a role in DNA repair. It seems to be involved in an RecBC-independent recombinational process of DNA repair. It may act with RecF and RecO. The chain is Recombination protein RecR from Neorickettsia sennetsu (strain ATCC VR-367 / Miyayama) (Ehrlichia sennetsu).